A 379-amino-acid chain; its full sequence is MLWKSLIALCVIGAAVAEQTPVFLWGANSVAKPSLKTVSQVEFAEQLAALLEDHMVVAFEENGLSSKDFLCSNSQAQSCYAQLQGVSPKTYYTSVENPSEALRSVAAKREHNSIDASGKLTTPAKCAVGTALFVTFEDAAESREASLESHDAAIAAISKQFECKVAYLYLAAPSTAPVVQRRTRRDTAATTGGIMWKSTNQFQIFYTALLYNGNPITVTDLKLTNSSSTKLSVVMDTSVADKPITFDVVYNGGYFSLSNLVYDNNNFRSSGVNAPTTFSYSCGNLTLESAAVNNMYNTLSFKSLQLQAPFDGTYKEDFPFGDSWDCVGFVTPGILMGLFVVALLLVIMFVGVCWMMDINTMDRFDDPKGKTITINAAAE.

Residues 1-17 form the signal peptide; it reads MLWKSLIALCVIGAAVA. At 18-333 the chain is on the lumenal side; it reads EQTPVFLWGA…WDCVGFVTPG (316 aa). N-linked (GlcNAc...) asparagine glycans are attached at residues asparagine 225 and asparagine 284. A disulfide bridge connects residues cysteine 282 and cysteine 326. Residues 334–354 form a helical membrane-spanning segment; it reads ILMGLFVVALLLVIMFVGVCW. Topologically, residues 355 to 379 are cytoplasmic; that stretch reads MMDINTMDRFDDPKGKTITINAAAE.

The protein belongs to the vacuolar ATPase subunit S1 family. Accessory component of the multisubunit proton-transporting vacuolar (V)-ATPase protein pump. May interact with ATP6AP2.

The protein localises to the endoplasmic reticulum membrane. In terms of biological role, accessory subunit of the proton-transporting vacuolar (V)-ATPase protein pump, which is required for luminal acidification of secretory vesicles. The polypeptide is V-type proton ATPase subunit S1 (Drosophila melanogaster (Fruit fly)).